Consider the following 249-residue polypeptide: DNA repair protein RecO (249 aa).

The protein belongs to the RecO family.

In terms of biological role, involved in DNA repair and RecF pathway recombination. The chain is DNA repair protein RecO from Sinorhizobium medicae (strain WSM419) (Ensifer medicae).